Reading from the N-terminus, the 258-residue chain is Putative L-lactate dehydrogenase operon regulatory protein (258 aa).

In terms of domain architecture, HTH gntR-type spans 6–74 (RRLSDEVADR…RGGGTFIRWR (69 aa)). A DNA-binding region (H-T-H motif) is located at residues 34 to 53 (ERQLAMQLGVSRNSLREALA).

Its function is as follows. May be a regulatory protein for the LCT genes. This chain is Putative L-lactate dehydrogenase operon regulatory protein (lldR), found in Escherichia coli (strain K12).